Reading from the N-terminus, the 564-residue chain is Chaperonin GroEL 2 (564 aa).

ATP contacts are provided by residues 29-32 (TIGP), 86-90 (DGTTT), Gly413, and Asp493. The segment at 521–541 (DKPEPPAPAGDGGGDPMGGMG) is disordered. Residues 530–541 (GDGGGDPMGGMG) are compositionally biased toward gly residues.

This sequence belongs to the chaperonin (HSP60) family. Forms a cylinder of 14 subunits composed of two heptameric rings stacked back-to-back. Interacts with the co-chaperonin GroES.

It localises to the cytoplasm. It carries out the reaction ATP + H2O + a folded polypeptide = ADP + phosphate + an unfolded polypeptide.. Together with its co-chaperonin GroES, plays an essential role in assisting protein folding. The GroEL-GroES system forms a nano-cage that allows encapsulation of the non-native substrate proteins and provides a physical environment optimized to promote and accelerate protein folding. The protein is Chaperonin GroEL 2 of Prochlorococcus marinus (strain MIT 9303).